The sequence spans 130 residues: Small ribosomal subunit protein uS11 (130 aa).

Belongs to the universal ribosomal protein uS11 family. In terms of assembly, part of the 30S ribosomal subunit. Interacts with proteins S7 and S18. Binds to IF-3.

Located on the platform of the 30S subunit, it bridges several disparate RNA helices of the 16S rRNA. Forms part of the Shine-Dalgarno cleft in the 70S ribosome. The protein is Small ribosomal subunit protein uS11 of Xylella fastidiosa (strain M23).